Consider the following 473-residue polypeptide: Cysteine--tRNA ligase (473 aa).

Zn(2+) is bound at residue Cys28. Positions 30–40 (MTVYDFCHIGH) match the 'HIGH' region motif. Zn(2+) contacts are provided by Cys212, His237, and Glu241. The 'KMSKS' region signature appears at 277–281 (KMSKS). Residue Lys280 coordinates ATP.

The protein belongs to the class-I aminoacyl-tRNA synthetase family. In terms of assembly, monomer. Zn(2+) is required as a cofactor.

It is found in the cytoplasm. The catalysed reaction is tRNA(Cys) + L-cysteine + ATP = L-cysteinyl-tRNA(Cys) + AMP + diphosphate. The sequence is that of Cysteine--tRNA ligase from Polynucleobacter asymbioticus (strain DSM 18221 / CIP 109841 / QLW-P1DMWA-1) (Polynucleobacter necessarius subsp. asymbioticus).